The sequence spans 581 residues: Frizzled-8 (581 aa).

The first 23 residues, 1–23, serve as a signal peptide directing secretion; sequence MESLSLSLLLLVSWLQGSQCAAA. The 121-residue stretch at 24–144 folds into the FZ domain; the sequence is KELSCQEITV…GNPDTLCMDY (121 aa). Residues 24-239 are Extracellular-facing; the sequence is KELSCQEITV…PEERTFTEFW (216 aa). 5 disulfides stabilise this stretch: C28/C89, C36/C82, C73/C111, C100/C141, and C104/C128. N-linked (GlcNAc...) asparagine glycosylation is present at N42. 64–71 contributes to the hexadecanoate binding site; it reads QFWPLVVI. Residues 88-93 form a wnt-binding region; it reads ICLEDY. The interval 140 to 146 is wnt-binding; the sequence is LCMDYYN. The N-linked (GlcNAc...) asparagine glycan is linked to N146. The segment at 151-189 is disordered; the sequence is TTAAPSHPEPPKPPARSVPKGRTRVEPPRSRSRATGCES. Pro residues predominate over residues 157–166; the sequence is HPEPPKPPAR. Residues 240–260 traverse the membrane as a helical segment; the sequence is IGLWSVLCFASTFATVSTFLI. Residues 261-271 are Cytoplasmic-facing; the sequence is DMERFKYPERP. The chain crosses the membrane as a helical span at residues 272-292; it reads IIFLSACYLLVSTGYLIRLIA. The Extracellular portion of the chain corresponds to 293–320; the sequence is GHEKVACSRGELDLEHIIHYETTGPALC. A helical transmembrane segment spans residues 321–341; that stretch reads TLVFLLIYFFGMASSIWWVIL. Over 342–377 the chain is Cytoplasmic; sequence SLTWFLAAGMKWGNEAIAGYSQYFHLAAWLVPSIKS. The chain crosses the membrane as a helical span at residues 378 to 398; sequence IAVLALSSVDGDPVAGICFVG. Over 399–407 the chain is Extracellular; the sequence is NQNLDNLRG. A helical transmembrane segment spans residues 408–428; sequence FVLAPLVIYLFIGSMFLLAGF. Topologically, residues 429–454 are cytoplasmic; the sequence is VSLFRIRSVIKQGGTKTDKLEKLMIR. The chain crosses the membrane as a helical span at residues 455–475; sequence IGIFSVLYTVPATIVVACFFY. At 476-505 the chain is on the extracellular side; that stretch reads EQHNRQGWEVAHNCNSCQPEMAQPHRPDYA. The helical transmembrane segment at 506–526 threads the bilayer; that stretch reads VFMLKYFMCLVVGITSGVWIW. Residues 527 to 581 lie on the Cytoplasmic side of the membrane; that stretch reads SGKTLESWRAFCTRCCWGSKATGGSMYSDVSTGLTWRSGTGSSVSCPKQMPLSQV. Residues 529–534 carry the Lys-Thr-X-X-X-Trp motif, mediates interaction with the PDZ domain of Dvl family members motif; the sequence is KTLESW. The PDZ-binding signature appears at 579–581; the sequence is SQV.

Belongs to the G-protein coupled receptor Fz/Smo family. In terms of assembly, interacts with lypd6 and the interaction is strongly enhanced by wnt3a.

Its subcellular location is the membrane. The protein resides in the cell membrane. Its function is as follows. Receptor for Wnt proteins. Most of frizzled receptors are coupled to the beta-catenin canonical signaling pathway, which leads to the activation of disheveled proteins, inhibition of GSK-3 kinase, nuclear accumulation of beta-catenin and activation of Wnt target genes. A second signaling pathway involving PKC and calcium fluxes has been seen for some family members, but it is not yet clear if it represents a distinct pathway or if it can be integrated in the canonical pathway, as PKC seems to be required for Wnt-mediated inactivation of GSK-3 kinase. Both pathways seem to involve interactions with G-proteins. May be involved in transduction and intercellular transmission of polarity information during tissue morphogenesis and/or in differentiated tissues. Activation by Wnt8, Wnt5A or Wnt3A induces expression of beta-catenin target genes. Displays an axis-inducing activity. The protein is Frizzled-8 (fzd8) of Xenopus laevis (African clawed frog).